Reading from the N-terminus, the 635-residue chain is Extracellular metalloproteinase mep (635 aa).

A signal peptide spans 1-19 (MMRGLLLAGALGLPLAVLA). The propeptide occupies 20 to 246 (HPTHHAHGLQ…VHGVVDYVAE (227 aa)). An N-linked (GlcNAc...) asparagine glycan is attached at Asn287. Residues 290 to 309 (TTRGNNGIAQSNPTGGSQYL) are compositionally biased toward polar residues. A disordered region spans residues 290–311 (TTRGNNGIAQSNPTGGSQYLKN). Zn(2+) is bound at residue His430. The active site involves Glu431. Residue His434 participates in Zn(2+) binding.

The protein belongs to the peptidase M36 family. The cofactor is Zn(2+).

Its subcellular location is the secreted. Functionally, secreted metalloproteinase that allows assimilation of proteinaceous substrates. The polypeptide is Extracellular metalloproteinase mep (mep) (Aspergillus flavus (strain ATCC 200026 / FGSC A1120 / IAM 13836 / NRRL 3357 / JCM 12722 / SRRC 167)).